The chain runs to 341 residues: Eukaryotic translation initiation factor 3 subunit I (341 aa).

WD repeat units lie at residues glycine 8–threonine 47, glycine 56–threonine 95, leucine 151–alanine 190, glutamate 194–valine 233, threonine 235–glutamate 274, and glycine 291–proline 331.

The protein belongs to the eIF-3 subunit I family. In terms of assembly, component of the eukaryotic translation initiation factor 3 (eIF-3) complex.

The protein resides in the cytoplasm. Its function is as follows. Component of the eukaryotic translation initiation factor 3 (eIF-3) complex, which is involved in protein synthesis of a specialized repertoire of mRNAs and, together with other initiation factors, stimulates binding of mRNA and methionyl-tRNAi to the 40S ribosome. The eIF-3 complex specifically targets and initiates translation of a subset of mRNAs involved in cell proliferation. The sequence is that of Eukaryotic translation initiation factor 3 subunit I from Cryptococcus neoformans var. neoformans serotype D (strain B-3501A) (Filobasidiella neoformans).